A 171-amino-acid chain; its full sequence is MKNIVLTGFMATGKTTVGKKVATNMSFGFIDTDKMIEKMANMTVSDIFEKYGEDYFRRLEKAAVIKAARLKNFVIATGGGVVLNPSNIVQLRKNGVVICFVARPEIILRNIGKNKDRPLLMVDNPEEKIRQLLKEREPFYRFADYTIDVSDMTIDEVAEEVIKAYIRLKKG.

11 to 16 (ATGKTT) is an ATP binding site. Residue Thr15 coordinates Mg(2+). Asp33, Arg57, and Gly79 together coordinate substrate. Position 117 (Arg117) interacts with ATP. Residue Arg136 coordinates substrate.

This sequence belongs to the shikimate kinase family. In terms of assembly, monomer. The cofactor is Mg(2+).

Its subcellular location is the cytoplasm. The enzyme catalyses shikimate + ATP = 3-phosphoshikimate + ADP + H(+). The protein operates within metabolic intermediate biosynthesis; chorismate biosynthesis; chorismate from D-erythrose 4-phosphate and phosphoenolpyruvate: step 5/7. In terms of biological role, catalyzes the specific phosphorylation of the 3-hydroxyl group of shikimic acid using ATP as a cosubstrate. This is Shikimate kinase from Thermoanaerobacter pseudethanolicus (strain ATCC 33223 / 39E) (Clostridium thermohydrosulfuricum).